The primary structure comprises 88 residues: Large ribosomal subunit protein bL27 (88 aa).

A disordered region spans residues 1–24; the sequence is MAHKKGTGSTRNGRDSNSKRLGVK.

Belongs to the bacterial ribosomal protein bL27 family.

This is Large ribosomal subunit protein bL27 from Prochlorococcus marinus (strain MIT 9313).